Here is a 505-residue protein sequence, read N- to C-terminus: Actin nucleation-promoting factor WASL (505 aa).

Ser-2 bears the N-acetylserine mark. The 108-residue stretch at 34–141 (LGKKCVTMSS…KAVTDLLGRR (108 aa)) folds into the WH1 domain. Disordered regions lie at residues 138-163 (LGRRQRKSEKRRDPPNGPNLPMATVD) and 184-205 (HTKEKKKGKAKKKRLTKADIGT). Over residues 186–198 (KEKKKGKAKKKRL) the composition is skewed to basic residues. The 14-residue stretch at 203–216 (IGTPSNFQHIGHVG) folds into the CRIB domain. A Phosphoserine; by TNK2 modification is found at Ser-242. The residue at position 256 (Tyr-256) is a Phosphotyrosine; by FAK1 and TNK2. The segment at 266-406 (EAVKNELRRQ…HQVPTTAGNK (141 aa)) is disordered. Pro residues-rich tracts occupy residues 276-364 (APPP…PPPS) and 371-391 (VAPPPPPPPPPPPGPPPPPGL). Arg-307 is modified (omega-N-methylarginine). 2 consecutive WH2 domains span residues 405-422 (NKAALLDQIREGAQLKKV) and 433-450 (GRDALLDQIRQGIQLKSV). Residues 476–505 (QKRSKAIHSSDEDEDEDDEEDFEDDDEWED) form a disordered region. Residues Ser-484 and Ser-485 each carry the phosphoserine modification. The span at 486–505 (DEDEDEDDEEDFEDDDEWED) shows a compositional bias: acidic residues.

As to quaternary structure, binds actin and the Arp2/3 complex. Interacts with CDC42. Interacts with FCHSD1. Interacts with FCHSD2. Binds to SH3 domains of GRB2. Interacts with the C-terminal SH3 domain of DNMBP. Interacts with SNX9. Interacts with the WW domains of PRPF40A/FBP11. Interacts with PTK2/FAK1. Interacts with PACSIN1, PACSIN2 and PACSIN3. Interacts with NOSTRIN. Binds to TNK2. Interacts with SNX33. Interacts with NONO (via second RRM domain); the interaction is direct. Component of a multiprotein complex with NONO and SFPQ; associates with the complex via direct interaction with NONO. In terms of assembly, (Microbial infection) Interacts with E.coli effector protein EspF(U). Identified in a complex containing at least WASL, BAIAP2L1 and E.coli EspF(U). (Microbial infection) Interacts with Shigella flexneri protein IcsA. The interaction with IcsA enhances the affinity of WASL for Arp2/3, thus assembling a tight complex which has maximal activity in actin assembly. Post-translationally, phosphorylation at Ser-242, Tyr-256, Ser-484 and Ser-485 enhances actin polymerization activity.

It localises to the cytoplasm. Its subcellular location is the cytoskeleton. The protein localises to the nucleus. Functionally, regulates actin polymerization by stimulating the actin-nucleating activity of the Arp2/3 complex. Involved in various processes, such as mitosis and cytokinesis, via its role in the regulation of actin polymerization. Together with CDC42, involved in the extension and maintenance of the formation of thin, actin-rich surface projections called filopodia. In addition to its role in the cytoplasm, also plays a role in the nucleus by regulating gene transcription, probably by promoting nuclear actin polymerization. Binds to HSF1/HSTF1 and forms a complex on heat shock promoter elements (HSE) that negatively regulates HSP90 expression. Plays a role in dendrite spine morphogenesis. Decreasing levels of DNMBP (using antisense RNA) alters apical junction morphology in cultured enterocytes, junctions curve instead of being nearly linear. This Homo sapiens (Human) protein is Actin nucleation-promoting factor WASL (WASL).